Here is a 313-residue protein sequence, read N- to C-terminus: Glutathione S-transferase omega-like 2 (313 aa).

The Nucleophile role is filled by C49. The GST C-terminal domain occupies 161–289; it reads PSSLRTKIDE…TDFKHIKCHY (129 aa).

This sequence belongs to the GST superfamily. Omega family.

It localises to the cytoplasm. It is found in the nucleus. Its subcellular location is the golgi apparatus. The enzyme catalyses RX + glutathione = an S-substituted glutathione + a halide anion + H(+). The catalysed reaction is L-dehydroascorbate + 2 glutathione = glutathione disulfide + L-ascorbate. Active as '1-Cys' thiol transferase against beta-hydroxyethyl disulfide (HED), as dehydroascorbate reductase and as dimethylarsinic acid reductase, while not active against the standard GST substrate 1-chloro-2,4-dinitrobenzene (CDNB). May be involved in cell wall organization and biogenesis. The sequence is that of Glutathione S-transferase omega-like 2 (gto2) from Schizosaccharomyces pombe (strain 972 / ATCC 24843) (Fission yeast).